We begin with the raw amino-acid sequence, 575 residues long: Trihelix transcription factor GT-2 (575 aa).

The segment covering M1–S11 has biased composition (low complexity). 4 disordered regions span residues M1–R44, I157–S181, F232–K256, and G339–I364. In terms of domain architecture, Myb-like 1 spans N40–Y98. Composition is skewed to low complexity over residues S161–S172 and F232–A241. Over residues R355 to I364 the composition is skewed to polar residues. The 65-residue stretch at S390–N454 folds into the Myb-like 2 domain. Positions T513–T575 are disordered. Acidic residues predominate over residues K528–E555. A compositionally biased stretch (polar residues) spans N561 to T575.

It localises to the nucleus. In terms of biological role, probable transcription factor that binds specific DNA sequence. This chain is Trihelix transcription factor GT-2 (GT-2), found in Arabidopsis thaliana (Mouse-ear cress).